The chain runs to 633 residues: Cyclic GMP-AMP synthase-like receptor 1 (633 aa).

Disordered regions lie at residues 23-80 (KVHG…HPHT), 107-214 (FKGP…TDPF), and 250-276 (REDD…RPSS). Basic and acidic residues predominate over residues 29-67 (KQHESAHPPRERHTERTATKRSDETKTASRPTASHEGKT). Positions 68-80 (HTTNPRGQVHPHT) are enriched in polar residues. Basic and acidic residues-rich tracts occupy residues 125–143 (RKPE…DHRT), 176–194 (RKPD…DHRT), and 250–274 (REDD…DDRP). The Mg(2+) site is built by glutamate 353, aspartate 355, and aspartate 455.

This sequence belongs to the mab-21 family. Mg(2+) is required as a cofactor. Requires Mn(2+) as cofactor.

It carries out the reaction UTP + ATP = 2',3'-cUAMP + 2 diphosphate. Functionally, nucleotidyltransferase that catalyzes the formation of cyclic UMP-AMP (2',3'-cUAMP) from ATP and UTP and plays a key role in innate immunity. Acts as a key sensor of double-stranded DNA (dsDNA), the presence of dsDNA in the cytoplasm being a danger signal that triggers the immune responses. Directly binds dsDNA, activating the nucleotidyltransferase activity, leading to synthesis of 2',3'-cUAMP, a second messenger that binds to and activates Sting, thereby triggering the immune response via activation of the NF-kappa-B transcription factor. This is Cyclic GMP-AMP synthase-like receptor 1 from Crassostrea virginica (Eastern oyster).